Consider the following 947-residue polypeptide: MSSTEAKQYKEKPSKEYLHASDGDDPANNSAASSSSSSSTSTSASSSAAAVPRKAAAASAADDSDSDEDIDQLIDELQSNYGEGDESGEEEVRTDGVHAGQRVVPEKDLSTDPAYGLTSDEVARRRKKYGLNQMAEENESLIVKFLMFFVGPIQFVMEAAAILAAGLSDWVDVGVICALLLLNASVGFIQEFQAGSIVDELKKTLANTATVIRDGQLIEIPANEVVPGEILQLESGTIAPADGRIVTEDCFLQIDQSAITGESLAAEKHYGDEVFSSSTVKTGEAFMVVTATGDNTFVGRAAALVGQASGVEGHFTEVLNGIGIILLVLVIATLLLVWTACFYRTVGIVSILRYTLGITIIGVPVGLPAVVTTTMAVGAAYLAKKQAIVQKLSAIESLAGVEILCSDKTGTLTKNKLSLHEPYTVEGVSPDDLMLTACLAASRKKKGLDAIDKAFLKSLIEYPKAKDALTKYKVLEFHPFDPVSKKVTAVVESPEGERIVCVKGAPLFVLKTVEEDHPIPEDVHENYENKVAELASRGFRALGVARKRGEGHWEILGVMPCMDPPRDDTAQTINEARNLGLRIKMLTGDAVGIAKETCRQLGLGTNIYNAERLGLGGGGDMPGSELADFVENADGFAEVFPQHKYRVVEILQNRGYLVAMTGDGVNDAPSLKKADTGIAVEGATDAARSAADIVFLAPGLSAIIDALKTSRQIFHRMYSYVVYRIALSLHLEIFLGLWIAILNNSLDINLIVFIAIFADVATLTIAYDNAPYAPEPVKWNLPRLWGMSIILGIVLAIGSWITLTTMFLPNGGIIQNFGAMNGVMFLQISLTENWLIFVTRAAGPFWSSIPSWQLAGAVFAVDIIATMFTLFGWWSENWTDIVSVVRVWIWSIGIFCVLGGFYYIMSTSQAFDRLMNGKSLKEKKSTRSVEDFMAAMQRVSTQHEKSS.

The segment at 1–103 (MSSTEAKQYK…TDGVHAGQRV (103 aa)) is disordered. At 1–144 (MSSTEAKQYK…AEENESLIVK (144 aa)) the chain is on the cytoplasmic side. Positions 7-22 (KQYKEKPSKEYLHASD) are enriched in basic and acidic residues. A compositionally biased stretch (low complexity) spans 26–61 (PANNSAASSSSSSSTSTSASSSAAAVPRKAAAASAA). The span at 62 to 74 (DDSDSDEDIDQLI) shows a compositional bias: acidic residues. A helical membrane pass occupies residues 145 to 165 (FLMFFVGPIQFVMEAAAILAA). Topologically, residues 166–169 (GLSD) are extracellular. The helical transmembrane segment at 170-189 (WVDVGVICALLLLNASVGFI) threads the bilayer. At 190–320 (QEFQAGSIVD…VEGHFTEVLN (131 aa)) the chain is on the cytoplasmic side. Residues 321 to 342 (GIGIILLVLVIATLLLVWTACF) form a helical membrane-spanning segment. The Extracellular segment spans residues 343–353 (YRTVGIVSILR). Residues 354-376 (YTLGITIIGVPVGLPAVVTTTMA) form a helical membrane-spanning segment. Topologically, residues 377-748 (VGAAYLAKKQ…IAILNNSLDI (372 aa)) are cytoplasmic. Aspartate 407 acts as the 4-aspartylphosphate intermediate in catalysis. Mg(2+)-binding residues include aspartate 663 and aspartate 667. The chain crosses the membrane as a helical span at residues 749 to 767 (NLIVFIAIFADVATLTIAY). At 768-783 (DNAPYAPEPVKWNLPR) the chain is on the extracellular side. Residues 784–803 (LWGMSIILGIVLAIGSWITL) form a helical membrane-spanning segment. Over 804-853 (TTMFLPNGGIIQNFGAMNGVMFLQISLTENWLIFVTRAAGPFWSSIPSWQ) the chain is Cytoplasmic. A helical transmembrane segment spans residues 854–874 (LAGAVFAVDIIATMFTLFGWW). Residues 875–886 (SENWTDIVSVVR) are Extracellular-facing. A helical membrane pass occupies residues 887-903 (VWIWSIGIFCVLGGFYY). The Cytoplasmic portion of the chain corresponds to 904-947 (IMSTSQAFDRLMNGKSLKEKKSTRSVEDFMAAMQRVSTQHEKSS).

This sequence belongs to the cation transport ATPase (P-type) (TC 3.A.3) family. Type IIIA subfamily.

It is found in the cell membrane. The catalysed reaction is ATP + H2O + H(+)(in) = ADP + phosphate + 2 H(+)(out). The plasma membrane ATPase of plants and fungi is a hydrogen ion pump. The proton gradient it generates drives the active transport of nutrients by H(+)-symport. The resulting external acidification and/or internal alkinization may mediate growth responses. The polypeptide is Plasma membrane ATPase 2 (PMA2) (Saccharomyces cerevisiae (strain ATCC 204508 / S288c) (Baker's yeast)).